Reading from the N-terminus, the 204-residue chain is Urease accessory protein UreG (204 aa).

11 to 18 (GPVGAGKT) contributes to the GTP binding site.

The protein belongs to the SIMIBI class G3E GTPase family. UreG subfamily. In terms of assembly, homodimer. UreD, UreF and UreG form a complex that acts as a GTP-hydrolysis-dependent molecular chaperone, activating the urease apoprotein by helping to assemble the nickel containing metallocenter of UreC. The UreE protein probably delivers the nickel.

The protein localises to the cytoplasm. In terms of biological role, facilitates the functional incorporation of the urease nickel metallocenter. This process requires GTP hydrolysis, probably effectuated by UreG. This Staphylococcus epidermidis (strain ATCC 35984 / DSM 28319 / BCRC 17069 / CCUG 31568 / BM 3577 / RP62A) protein is Urease accessory protein UreG.